The following is a 265-amino-acid chain: Lipopolysaccharide core heptose(I) kinase WaaP (265 aa).

Asp162 is an active-site residue.

The protein belongs to the protein kinase superfamily. KdkA/RfaP family. Mg(2+) serves as cofactor.

It is found in the cell inner membrane. The catalysed reaction is an L-alpha-D-Hep-(1-&gt;3)-L-alpha-D-Hep-(1-&gt;5)-[alpha-Kdo-(2-&gt;4)]-alpha-Kdo-(2-&gt;6)-lipid A + ATP = an L-alpha-D-Hep-(1-&gt;3)-4-O-phospho-L-alpha-D-Hep-(1-&gt;5)-[alpha-Kdo-(2-&gt;4)]-alpha-Kdo-(2-&gt;6)-lipid A + ADP + H(+). The enzyme catalyses L-alpha-D-Hep-(1-&gt;3)-L-alpha-D-Hep-(1-&gt;5)-[alpha-Kdo-(2-&gt;4)]-alpha-Kdo-(2-&gt;6)-lipid A (E. coli) + ATP = L-alpha-D-Hep-(1-&gt;3)-4-O-phospho-L-alpha-D-Hep-(1-&gt;5)-[alpha-Kdo-(2-&gt;4)]-alpha-Kdo-(2-&gt;6)-lipid A (E. coli) + ADP + H(+). The protein operates within bacterial outer membrane biogenesis; LPS core biosynthesis. In terms of biological role, kinase involved in the biosynthesis of the core oligosaccharide region of lipopolysaccharide (LPS). Catalyzes the phosphorylation of heptose I (HepI), the first heptose added to the Kdo2-lipid A module. The protein is Lipopolysaccharide core heptose(I) kinase WaaP of Escherichia coli.